Consider the following 180-residue polypeptide: Large ribosomal subunit protein uL5 (180 aa).

This sequence belongs to the universal ribosomal protein uL5 family. In terms of assembly, part of the 50S ribosomal subunit; part of the 5S rRNA/L5/L18/L25 subcomplex. Contacts the 5S rRNA and the P site tRNA. Forms a bridge to the 30S subunit in the 70S ribosome.

Functionally, this is one of the proteins that bind and probably mediate the attachment of the 5S RNA into the large ribosomal subunit, where it forms part of the central protuberance. In the 70S ribosome it contacts protein S13 of the 30S subunit (bridge B1b), connecting the 2 subunits; this bridge is implicated in subunit movement. Contacts the P site tRNA; the 5S rRNA and some of its associated proteins might help stabilize positioning of ribosome-bound tRNAs. The protein is Large ribosomal subunit protein uL5 of Anaeromyxobacter sp. (strain Fw109-5).